The primary structure comprises 103 residues: Small ribosomal subunit protein uS10 (103 aa).

This sequence belongs to the universal ribosomal protein uS10 family. As to quaternary structure, part of the 30S ribosomal subunit.

Functionally, involved in the binding of tRNA to the ribosomes. The polypeptide is Small ribosomal subunit protein uS10 (Shewanella baltica (strain OS223)).